Consider the following 410-residue polypeptide: Zinc transporter ttm-1 (410 aa).

Low complexity-rich tracts occupy residues 1 to 13 and 35 to 46; these read MTIS…SIRL and SVSSSDSGVSAD. The tract at residues 1 to 94 is disordered; the sequence is MTISMISPSS…GAHKHSHDEK (94 aa). Residues 1-103 lie on the Cytoplasmic side of the membrane; sequence MTISMISPSS…KYQKGRRAEK (103 aa). Positions 50–69 are enriched in basic residues; the sequence is HHHHGHGHGHSHGGHGHSHT. A helical transmembrane segment spans residues 104–124; that stretch reads VLWAVAALSAVFIAAEFVGGF. Topologically, residues 125-129 are extracellular; that stretch reads WAQSL. Residues 130 to 150 traverse the membrane as a helical segment; that stretch reads AIMTDAGHMLSDLLSFIISIF. The Cytoplasmic segment spans residues 151–171; the sequence is AIRCARLPASKRLSFGYERAE. Residues 172 to 192 traverse the membrane as a helical segment; it reads VLGALTSVIILWVLTTVLVVV. Over 193-208 the chain is Extracellular; that stretch reads AIQRIVNNEHEVDADV. The chain crosses the membrane as a helical span at residues 209 to 229; the sequence is MLITAGVGVLFNIVMGLVLHF. Residues 230–258 are Cytoplasmic-facing; the sequence is GTGGHGHTHGGHSSHGHAHDGKNVNVRAA. A helical transmembrane segment spans residues 259–279; the sequence is LIHVIGDLVQSIGVLIAALII. R280 is a topological domain (extracellular). A helical transmembrane segment spans residues 281-301; that stretch reads FTGWTLADPICTFLFSIIVLF. The Cytoplasmic portion of the chain corresponds to 302-410; it reads TTVTVMRDIF…CDTCQQQETA (109 aa).

This sequence belongs to the cation diffusion facilitator (CDF) transporter (TC 2.A.4) family. SLC30A subfamily. As to expression, isoform a: Expressed in the hypodermis and the intestine. Isoform b: Expressed in the intestine, head neurons, seam cells, hypodermis, and the vulva.

Its subcellular location is the cytoplasmic vesicle membrane. It localises to the apical cell membrane. Promotes excretion of zinc from intestinal cells into the intestinal lumen in response to increased dietary zinc. Involved in cadmium resistance, possibly by promoting its transport from cells. Involved in resistance to B.thuringiensis pore-forming toxin Cry5B downstream of the sek-1 and pmk-1 MAPK kinase pathway. The chain is Zinc transporter ttm-1 from Caenorhabditis elegans.